Consider the following 210-residue polypeptide: Protein GET1 (210 aa).

Over 1 to 4 the chain is Lumenal; sequence MASL. The chain crosses the membrane as a helical span at residues 5-24; that stretch reads LIIVFLSHVVTYLINTIGAT. Residues 25–110 lie on the Cytoplasmic side of the membrane; the sequence is TVDNLLWLLY…SFDLTVKSVR (86 aa). Residues 43 to 97 adopt a coiled-coil conformation; it reads RTAVEQRRLKGEVVQLKREMKSTSSQDEFAKWAKLRRRHDKAMEEYEAKNKALGK. The chain crosses the membrane as a helical span at residues 111–131; it reads FFSTTGLKFFLQFWYSKTPMF. The Lumenal segment spans residues 132-155; that stretch reads ELPRGWVPWQVEWVLSFPRAPLGT. Residues 156 to 172 form a helical membrane-spanning segment; sequence VSIQVWSGVCTTVVSLA. Topologically, residues 173-210 are cytoplasmic; sequence GDALGVVIQSLILKMTKRGVARTSEGRPSQPMALKKEL.

It belongs to the WRB/GET1 family. In terms of assembly, interacts with GET3.

The protein localises to the endoplasmic reticulum membrane. Required for the post-translational delivery of tail-anchored (TA) proteins to the endoplasmic reticulum. Acts as a membrane receptor for soluble GET3, which recognizes and selectively binds the transmembrane domain of TA proteins in the cytosol. In Uncinocarpus reesii (strain UAMH 1704), this protein is Protein GET1.